The following is a 1385-amino-acid chain: Defecation cycle abnormal dec-7 (1385 aa).

A signal peptide spans Met1–Ser19. N-linked (GlcNAc...) asparagine glycosylation occurs at Asn156. A disordered region spans residues Ser234–Tyr262. Positions Asn242 to Gln261 are enriched in low complexity. Positions Gln285–Val450 constitute an NIDO domain. Residues Asn313, Asn386, Asn413, Asn458, Asn480, Asn562, and Asn583 are each glycosylated (N-linked (GlcNAc...) asparagine). Residues Gly681 to Arg840 form the AMOP domain. One can recognise a VWFD domain in the interval Ala852–Lys1088. N-linked (GlcNAc...) asparagine glycosylation is found at Asn909, Asn921, Asn975, Asn1009, and Asn1124. In terms of domain architecture, Sushi spans Ile1179–Asp1238. Cystine bridges form between Cys1181–Cys1223 and Cys1209–Cys1236. Asn1225 carries N-linked (GlcNAc...) asparagine glycosylation. Residues Leu1251 to Ile1271 traverse the membrane as a helical segment. Residues Met1321–Ile1385 are disordered.

In terms of tissue distribution, highly expressed in the intestinal epithelia.

Its subcellular location is the membrane. It is found in the cell junction. Functionally, may negatively regulate activity of innexin gap junction protein inx-16, thereby mediating the rhythmic frequency of the defecation motor program. Required for the clustering of inx-16 to the cell-cell junction of the intestinal epithelia. Probably dispensable for intestinal integrity. May be a cytokine receptor. The protein is Defecation cycle abnormal dec-7 of Caenorhabditis elegans.